We begin with the raw amino-acid sequence, 399 residues long: Argininosuccinate synthase (399 aa).

12–20 (AFSGGLDTS) contributes to the ATP binding site. An L-citrulline-binding site is contributed by Tyr90. Gly120 contacts ATP. Residues Thr122, Asn126, and Asp127 each contribute to the L-aspartate site. Asn126 contributes to the L-citrulline binding site. L-citrulline contacts are provided by Arg130, Ser175, Glu260, and Tyr272.

The protein belongs to the argininosuccinate synthase family. Type 1 subfamily. In terms of assembly, homotetramer.

It is found in the cytoplasm. The catalysed reaction is L-citrulline + L-aspartate + ATP = 2-(N(omega)-L-arginino)succinate + AMP + diphosphate + H(+). Its pathway is amino-acid biosynthesis; L-arginine biosynthesis; L-arginine from L-ornithine and carbamoyl phosphate: step 2/3. The polypeptide is Argininosuccinate synthase (Methanothermobacter thermautotrophicus (strain ATCC 29096 / DSM 1053 / JCM 10044 / NBRC 100330 / Delta H) (Methanobacterium thermoautotrophicum)).